Consider the following 394-residue polypeptide: Aspergillopepsin-1 (394 aa).

The signal sequence occupies residues 1–20 (MVVFSKVTAAVFGLATIASA). Residues 21–69 (APAPPTRKGFTVQQQARPAQKKQVNLPAMYAHALTKFGGSVPESVKVAA) constitute a propeptide, activation peptide. The Peptidase A1 domain maps to 85–391 (YLTPVNVGGT…DSEGPRLGFA (307 aa)). Residues aspartate 101 and aspartate 283 contribute to the active site. An intrachain disulfide couples cysteine 319 to cysteine 354.

This sequence belongs to the peptidase A1 family. In terms of assembly, monomer.

It is found in the secreted. It carries out the reaction Hydrolysis of proteins with broad specificity. Generally favors hydrophobic residues in P1 and P1', but also accepts Lys in P1, which leads to activation of trypsinogen. Does not clot milk.. Secreted aspartic endopeptidase that allows assimilation of proteinaceous substrates. The scissile peptide bond is attacked by a nucleophilic water molecule activated by two aspartic residues in the active site. Shows a broad primary substrate specificity. Favors hydrophobic residues at the P1 and P1' positions, but also accepts a lysine residue in the P1 position, leading to the activation of trypsinogen and chymotrypsinogen A. The protein is Aspergillopepsin-1 (pepA) of Aspergillus clavatus (strain ATCC 1007 / CBS 513.65 / DSM 816 / NCTC 3887 / NRRL 1 / QM 1276 / 107).